A 948-amino-acid polypeptide reads, in one-letter code: Bifunctional glutamine synthetase adenylyltransferase/adenylyl-removing enzyme (948 aa).

Positions 1 to 447 are adenylyl removase; that stretch reads MLTPDNKLMS…EFQQVVGAES (447 aa). Residues 453-948 form an adenylyl transferase region; it reads EQGLQVLWQD…NCWNHLLEDD (496 aa).

This sequence belongs to the GlnE family. Mg(2+) serves as cofactor.

The enzyme catalyses [glutamine synthetase]-O(4)-(5'-adenylyl)-L-tyrosine + phosphate = [glutamine synthetase]-L-tyrosine + ADP. The catalysed reaction is [glutamine synthetase]-L-tyrosine + ATP = [glutamine synthetase]-O(4)-(5'-adenylyl)-L-tyrosine + diphosphate. Its function is as follows. Involved in the regulation of glutamine synthetase GlnA, a key enzyme in the process to assimilate ammonia. When cellular nitrogen levels are high, the C-terminal adenylyl transferase (AT) inactivates GlnA by covalent transfer of an adenylyl group from ATP to specific tyrosine residue of GlnA, thus reducing its activity. Conversely, when nitrogen levels are low, the N-terminal adenylyl removase (AR) activates GlnA by removing the adenylyl group by phosphorolysis, increasing its activity. The regulatory region of GlnE binds the signal transduction protein PII (GlnB) which indicates the nitrogen status of the cell. The polypeptide is Bifunctional glutamine synthetase adenylyltransferase/adenylyl-removing enzyme (Idiomarina loihiensis (strain ATCC BAA-735 / DSM 15497 / L2-TR)).